The primary structure comprises 450 residues: CBL-interacting protein kinase 23 (450 aa).

Residues 13 to 268 enclose the Protein kinase domain; it reads YELGRTLGEG…IAELINNEWF (256 aa). Residues 19–27 and K42 each bind ATP; that span reads LGEGTFAKV. The active-site Proton acceptor is the D136. Residues 154–183 form an activation loop region; the sequence is DFGLSALSQQVREDGLLHTTCGTPNYVAPE. Positions 306-331 constitute an NAF domain; the sequence is EERPSVMNAFELISTSQGLNLGTLFE. The segment at 339–368 is PPI; sequence KRETRFASRLPANEILSKIEAAAGPMGFNV.

It belongs to the protein kinase superfamily. CAMK Ser/Thr protein kinase family. SNF1 subfamily. Requires Mn(2+) as cofactor.

It carries out the reaction L-seryl-[protein] + ATP = O-phospho-L-seryl-[protein] + ADP + H(+). The catalysed reaction is L-threonyl-[protein] + ATP = O-phospho-L-threonyl-[protein] + ADP + H(+). Its function is as follows. CIPK serine-threonine protein kinases interact with CBL proteins. Binding of a CBL protein to the regulatory NAF domain of CIPK protein lead to the activation of the kinase in a calcium-dependent manner. The protein is CBL-interacting protein kinase 23 (CIPK23) of Oryza sativa subsp. japonica (Rice).